The sequence spans 367 residues: Phospho-N-acetylmuramoyl-pentapeptide-transferase (367 aa).

10 helical membrane-spanning segments follow: residues 28-48, 75-95, 96-116, 134-154, 175-195, 206-226, 243-263, 271-291, 295-315, and 344-364; these read GALM…IGWL, TMGG…WADL, TNAY…IGFI, FKLV…THTA, LMIN…VGSG, GLAI…AYVV, AGEI…FLWW, FMGD…AVAI, LVLA…MVQV, and TIVI…LATL.

Belongs to the glycosyltransferase 4 family. MraY subfamily. It depends on Mg(2+) as a cofactor.

The protein resides in the cell inner membrane. It carries out the reaction UDP-N-acetyl-alpha-D-muramoyl-L-alanyl-gamma-D-glutamyl-meso-2,6-diaminopimeloyl-D-alanyl-D-alanine + di-trans,octa-cis-undecaprenyl phosphate = di-trans,octa-cis-undecaprenyl diphospho-N-acetyl-alpha-D-muramoyl-L-alanyl-D-glutamyl-meso-2,6-diaminopimeloyl-D-alanyl-D-alanine + UMP. It functions in the pathway cell wall biogenesis; peptidoglycan biosynthesis. In terms of biological role, catalyzes the initial step of the lipid cycle reactions in the biosynthesis of the cell wall peptidoglycan: transfers peptidoglycan precursor phospho-MurNAc-pentapeptide from UDP-MurNAc-pentapeptide onto the lipid carrier undecaprenyl phosphate, yielding undecaprenyl-pyrophosphoryl-MurNAc-pentapeptide, known as lipid I. In Maricaulis maris (strain MCS10) (Caulobacter maris), this protein is Phospho-N-acetylmuramoyl-pentapeptide-transferase.